The primary structure comprises 1197 residues: SRC kinase signaling inhibitor 1 (1197 aa).

The segment covering 19–45 (AEGRARSPREEVGPRDPGGRGEPDPER) has biased composition (basic and acidic residues). Residues 19–80 (AEGRARSPRE…GGSGGRRFSN (62 aa)) form a disordered region. S47 and S52 each carry phosphoserine. Residues 65-75 (LGGGGSGGSGG) are compositionally biased toward gly residues. At S79 the chain carries Phosphoserine. T86 carries the post-translational modification Phosphothreonine. 7 positions are modified to phosphoserine: S87, S98, S178, S200, S204, S214, and S260. Y276 carries the post-translational modification Phosphotyrosine. Residues 319–415 (ASRESSPTRR…RRDVKPDEDL (97 aa)) form a disordered region. The segment covering 321 to 331 (RESSPTRRLNN) has biased composition (polar residues). Positions 332 to 341 (LSPASHLASS) are enriched in low complexity. 3 positions are modified to phosphoserine: S333, S342, and S359. The span at 348–366 (PSGLPSGLPSGSPSRSRLS) shows a compositional bias: low complexity. 2 positions are modified to omega-N-methylarginine: R364 and R371. Phosphoserine is present on residues S378, S397, and S399. A compositionally biased stretch (polar residues) spans 391 to 400 (PTSQGVSPSP). Residues 404-415 (LERRDVKPDEDL) show a composition bias toward basic and acidic residues. Y431 carries the phosphotyrosine modification. The segment at 501-676 (GFRLPPSSPQ…AVSSTPAGQP (176 aa)) is disordered. A compositionally biased stretch (pro residues) spans 520–531 (GGPPPPHSPYSG). Residues S527, S530, and S534 each carry the phosphoserine modification. R535 carries the omega-N-methylarginine modification. Phosphoserine is present on residues S537, S547, S549, S551, and S556. The span at 595-607 (KDTETRERMEAME) shows a compositional bias: basic and acidic residues. 2 positions are modified to phosphoserine: S631 and S655. T658 and T671 each carry phosphothreonine. Residues 681-731 (RLQMQMHLRGLQNSASDLRGQLQQLRKLQLQNQESVRALLKRTEAELSMRV) form an interaction with SNAP25 region. 2 coiled-coil regions span residues 688 to 708 (LRGL…LRKL) and 760 to 780 (EELI…IQRD). Phosphoserine is present on residues S878 and S900. 2 disordered regions span residues 891 to 949 (GLDF…ERDW) and 983 to 1065 (DCAS…VVTS). T918 carries the post-translational modification Phosphothreonine. S1021 carries the post-translational modification Phosphoserine. A compositionally biased stretch (pro residues) spans 1036–1045 (KSPPPPPPRR). A phosphoserine mark is found at S1077 and S1094. The interval 1141-1163 (SRLKAAQGPAGSPDKGKHGKQRT) is disordered.

It belongs to the SRCIN1 family. In terms of assembly, interacts with BCAR1/p130Cas through its C-terminal domain and with CSK, CTTN and SRC. Also interacts with MAPRE3/EB3, SORBS3/vinexin and the N-terminal coiled-coil region of SNAP25. Tyrosine-phosphorylated in response to EGF and to cell adhesion to integrin ligands. In terms of tissue distribution, expressed exclusively in brain. Abundant in telencephalon and expressed moderately in cerebellum, hypothalamus, thalamus, superior and inferior colliculi, and olfactory bulb. No expression detected in medulla oblongata, spinal cord or pituitary gland. Enriched in the neuropil rather than soma in the thalamus, corpus striatum and cerebral cortex. Detected in astrocytes.

The protein localises to the cytoplasm. It localises to the cytoskeleton. The protein resides in the cell projection. It is found in the axon. Its subcellular location is the dendrite. The protein localises to the presynapse. It localises to the postsynapse. The protein resides in the postsynaptic density. Functionally, acts as a negative regulator of SRC by activating CSK which inhibits SRC activity and downstream signaling, leading to impaired cell spreading and migration. Regulates dendritic spine morphology. Involved in calcium-dependent exocytosis. May play a role in neurotransmitter release or synapse maintenance. The sequence is that of SRC kinase signaling inhibitor 1 from Rattus norvegicus (Rat).